Reading from the N-terminus, the 201-residue chain is Holliday junction branch migration complex subunit RuvA (201 aa).

The interval 1 to 64 (MFAFLRGELV…EDAQQLFGFL (64 aa)) is domain I. Residues 65-143 (DEEELQLFRL…KIQPAASGKT (79 aa)) are domain II. Residues 144 to 154 (AGAPQALQLNE) form a flexible linker region. The domain III stretch occupies residues 154 to 201 (EDALAALMTLGFPKPAAQKAISGILETSPGLSVEEVVRAALIAIHNNF).

It belongs to the RuvA family. As to quaternary structure, homotetramer. Forms an RuvA(8)-RuvB(12)-Holliday junction (HJ) complex. HJ DNA is sandwiched between 2 RuvA tetramers; dsDNA enters through RuvA and exits via RuvB. An RuvB hexamer assembles on each DNA strand where it exits the tetramer. Each RuvB hexamer is contacted by two RuvA subunits (via domain III) on 2 adjacent RuvB subunits; this complex drives branch migration. In the full resolvosome a probable DNA-RuvA(4)-RuvB(12)-RuvC(2) complex forms which resolves the HJ.

The protein localises to the cytoplasm. The RuvA-RuvB-RuvC complex processes Holliday junction (HJ) DNA during genetic recombination and DNA repair, while the RuvA-RuvB complex plays an important role in the rescue of blocked DNA replication forks via replication fork reversal (RFR). RuvA specifically binds to HJ cruciform DNA, conferring on it an open structure. The RuvB hexamer acts as an ATP-dependent pump, pulling dsDNA into and through the RuvAB complex. HJ branch migration allows RuvC to scan DNA until it finds its consensus sequence, where it cleaves and resolves the cruciform DNA. In Chlorobaculum tepidum (strain ATCC 49652 / DSM 12025 / NBRC 103806 / TLS) (Chlorobium tepidum), this protein is Holliday junction branch migration complex subunit RuvA.